Consider the following 397-residue polypeptide: Mitochondrial inner membrane magnesium transporter LPE10 (397 aa).

A mitochondrion-targeting transit peptide spans 1 to 37 (MLLVNRAITLNLVKRCCWRSTMFMTPKRFLGTSEEES). A helical membrane pass occupies residues 316–336 (LMLLGIRFSIGMLSLGGPIFI). The YGMN signature appears at 340–343 (YGMN). Residues 354–374 (GFIAASAIGMISLGALYFYSI) traverse the membrane as a helical segment.

This sequence belongs to the CorA metal ion transporter (MIT) (TC 1.A.35) family. As to quaternary structure, forms homooligomers. Interacts with MRS2.

Its subcellular location is the mitochondrion inner membrane. Mitochondrial inner membrane magnesium transporter required for mitochondrial magnesium homeostasis. Modulates the conductance of the MRS2 channel. Involved in the splicing of mRNA group II introns in mitochondria by affecting mitochondrial magnesium concentrations, which are critical for group II intron splicing. The protein is Mitochondrial inner membrane magnesium transporter LPE10 (LPE10) of Candida glabrata (strain ATCC 2001 / BCRC 20586 / JCM 3761 / NBRC 0622 / NRRL Y-65 / CBS 138) (Yeast).